A 253-amino-acid polypeptide reads, in one-letter code: Sulfate transporter CysZ (253 aa).

The next 4 helical transmembrane spans lie at 31 to 51, 72 to 92, 151 to 171, and 222 to 242; these read FVILPLLVNIVLMGGAFWWLF, LSYLLWPIAVISVLLVFGYFF, IVLLVLYFIPGIGQTIAPVLW, and IPVLNLFIMPVAVCGATAMWV.

Belongs to the CysZ family.

It is found in the cell inner membrane. Its function is as follows. High affinity, high specificity proton-dependent sulfate transporter, which mediates sulfate uptake. Provides the sulfur source for the cysteine synthesis pathway. The sequence is that of Sulfate transporter CysZ from Salmonella paratyphi A (strain AKU_12601).